The chain runs to 400 residues: Lysophospholipid transporter LplT (400 aa).

Transmembrane regions (helical) follow at residues 19-39 (VIVAQFLSAFGDNALLFATLA), 53-73 (VLQMVFVGAYILFAPFVGQIA), 91-111 (AGAAGICLGVNPFVGYTLVGI), 139-159 (LMEASTIAAILLGSVAGGVLA), 164-184 (IAALVACALAYAGAVAANLFI), 227-247 (LFWGAGVTLRFLLVLWVPVAL), 257-277 (YLNAMVAVGIVVGAGAAAKLV), 281-301 (TVSRCMPAGILIGVVVAIFSL), 304-324 (ALLPAYALLLLIGMLGGFFVV), 352-372 (NSAMLLMLGLYSLAVLVGVPA), and 373-393 (VAIGIGFGVLFALAIAALWIW).

This sequence belongs to the major facilitator superfamily. LplT (TC 2.A.1.42) family.

The protein resides in the cell inner membrane. Catalyzes the facilitated diffusion of 2-acyl-glycero-3-phosphoethanolamine (2-acyl-GPE) into the cell. The polypeptide is Lysophospholipid transporter LplT (Salmonella gallinarum (strain 287/91 / NCTC 13346)).